The sequence spans 461 residues: V-type ATP synthase beta chain (461 aa).

It belongs to the ATPase alpha/beta chains family.

Produces ATP from ADP in the presence of a proton gradient across the membrane. The V-type beta chain is a regulatory subunit. The protein is V-type ATP synthase beta chain of Clostridium botulinum (strain Kyoto / Type A2).